Reading from the N-terminus, the 515-residue chain is ATP synthase subunit alpha (515 aa).

171–178 contributes to the ATP binding site; it reads GDRQTGKT.

This sequence belongs to the ATPase alpha/beta chains family. As to quaternary structure, F-type ATPases have 2 components, CF(1) - the catalytic core - and CF(0) - the membrane proton channel. CF(1) has five subunits: alpha(3), beta(3), gamma(1), delta(1), epsilon(1). CF(0) has three main subunits: a(1), b(2) and c(9-12). The alpha and beta chains form an alternating ring which encloses part of the gamma chain. CF(1) is attached to CF(0) by a central stalk formed by the gamma and epsilon chains, while a peripheral stalk is formed by the delta and b chains.

It is found in the cell inner membrane. The catalysed reaction is ATP + H2O + 4 H(+)(in) = ADP + phosphate + 5 H(+)(out). Produces ATP from ADP in the presence of a proton gradient across the membrane. The alpha chain is a regulatory subunit. This Xylella fastidiosa (strain Temecula1 / ATCC 700964) protein is ATP synthase subunit alpha.